We begin with the raw amino-acid sequence, 684 residues long: Glycine--tRNA ligase beta subunit (684 aa).

Belongs to the class-II aminoacyl-tRNA synthetase family. Tetramer of two alpha and two beta subunits.

The protein localises to the cytoplasm. It carries out the reaction tRNA(Gly) + glycine + ATP = glycyl-tRNA(Gly) + AMP + diphosphate. The sequence is that of Glycine--tRNA ligase beta subunit from Pseudomonas aeruginosa (strain UCBPP-PA14).